A 129-amino-acid polypeptide reads, in one-letter code: Glyoxalase domain-containing protein 5 homolog (129 aa).

Residues Arg5–Tyr128 form the VOC domain.

This sequence belongs to the glyoxalase I family.

The chain is Glyoxalase domain-containing protein 5 homolog (glod5) from Dictyostelium discoideum (Social amoeba).